The chain runs to 132 residues: Holo-[acyl-carrier-protein] synthase (132 aa).

2 residues coordinate Mg(2+): Asp-8 and Glu-62.

It belongs to the P-Pant transferase superfamily. AcpS family. It depends on Mg(2+) as a cofactor.

It localises to the cytoplasm. The catalysed reaction is apo-[ACP] + CoA = holo-[ACP] + adenosine 3',5'-bisphosphate + H(+). In terms of biological role, transfers the 4'-phosphopantetheine moiety from coenzyme A to a Ser of acyl-carrier-protein. This chain is Holo-[acyl-carrier-protein] synthase, found in Leptothrix cholodnii (strain ATCC 51168 / LMG 8142 / SP-6) (Leptothrix discophora (strain SP-6)).